The sequence spans 454 residues: Lipase member H (454 aa).

Positions methionine 1–alanine 23 are cleaved as a signal peptide. Asparagine 73, asparagine 137, and asparagine 151 each carry an N-linked (GlcNAc...) asparagine glycan. Residue serine 161 is the Nucleophile of the active site. The Charge relay system role is filled by aspartate 185. A disulfide bridge connects residues cysteine 240 and cysteine 253. Catalysis depends on histidine 255, which acts as the Charge relay system. Asparagine 267 carries an N-linked (GlcNAc...) asparagine glycan. Disulfide bonds link cysteine 277/cysteine 288 and cysteine 291/cysteine 299. Asparagine 358 carries N-linked (GlcNAc...) asparagine glycosylation. The cysteines at positions 430 and 449 are disulfide-linked.

This sequence belongs to the AB hydrolase superfamily. Lipase family.

The protein localises to the secreted. It is found in the cell membrane. It catalyses the reaction 1-hexadecanoyl-2-(9Z-octadecenoyl)-sn-glycero-3-phosphate + H2O = 2-(9Z-octadecenoyl)-sn-glycero-3-phosphate + hexadecanoate + H(+). Functionally, hydrolyzes specifically phosphatidic acid (PA) to produce 2-acyl lysophosphatidic acid (LPA; a potent bioactive lipid mediator) and fatty acid. Does not hydrolyze other phospholipids, like phosphatidylserine (PS), phosphatidylcholine (PC) and phosphatidylethanolamine (PE) or triacylglycerol (TG). The chain is Lipase member H (liph) from Danio rerio (Zebrafish).